Reading from the N-terminus, the 399-residue chain is Lysosomal acid lipase/cholesteryl ester hydrolase (399 aa).

An N-terminal signal peptide occupies residues 1–27 (MKMRFLGLVVCLVLWTLHSEASGGKLT). A propeptide spans 28–76 (AVNPETNMNVSEIISYWGFPSEEYLVETEDGYILCLNRIPHGRKNHSDK) (removed in mature form). Residues N36, N72, N101, and N161 are each glycosylated (N-linked (GlcNAc...) asparagine). The AB hydrolase-1 domain occupies 80-380 (PVVFLQHGLL…EWEHLDFIWG (301 aa)). Catalysis depends on S174, which acts as the Charge relay system. 2 N-linked (GlcNAc...) asparagine glycosylation sites follow: N273 and N321. H374 serves as the catalytic Charge relay system.

The protein belongs to the AB hydrolase superfamily. Lipase family. Monomer. Glycosylation is not essential for catalytic activity.

The protein resides in the lysosome. It catalyses the reaction a sterol ester + H2O = a sterol + a fatty acid + H(+). The enzyme catalyses cholesteryl (9Z-octadecenoate) + H2O = cholesterol + (9Z)-octadecenoate + H(+). The catalysed reaction is a triacylglycerol + H2O = a 1,2-diacylglycerol + a fatty acid + H(+). It carries out the reaction 1,2-di-(9Z-octadecenoyl)-glycerol + (9Z)-octadecenoate + H(+) = 1,2,3-tri-(9Z-octadecenoyl)-glycerol + H2O. It catalyses the reaction a 1,2-diacylglycerol + H2O = a 1-acylglycerol + a fatty acid + H(+). The enzyme catalyses 1,2-di-(9Z-octadecenoyl)-glycerol + H2O = 1-(9Z-octadecenoyl)-glycerol + (9Z)-octadecenoate + H(+). The catalysed reaction is a 1,3-diacylglycerol + H2O = a 1-acylglycerol + a fatty acid + H(+). It carries out the reaction 1,3-di-(9Z-octadecenoyl)-glycerol + H2O = 1-(9Z-octadecenoyl)-glycerol + (9Z)-octadecenoate + H(+). Functionally, catalyzes the deacylation of cholesteryl ester core lipids of endocytosed low density lipoproteins to generate free fatty acids and cholesterol. Hydrolyzes triglycerides (1,2,3-triacylglycerol) and diglycerides (such as 1,2-diacylglycerol and 1,3-diacylglycerol) with preference for the acyl moieties at the sn-1 or sn-3 positions. This chain is Lysosomal acid lipase/cholesteryl ester hydrolase (LIPA), found in Macaca fascicularis (Crab-eating macaque).